Here is a 389-residue protein sequence, read N- to C-terminus: Succinate--CoA ligase [ADP-forming] subunit beta (389 aa).

The ATP-grasp domain maps to 9 to 246; that stretch reads KEILRRHNAN…ITEEDPYEVK (238 aa). ATP-binding positions include K48, 55–57, E101, L104, and E109; that span reads GRG. Positions 201 and 215 each coordinate Mg(2+). Substrate is bound by residues N266 and 323–325; that span reads GIV.

The protein belongs to the succinate/malate CoA ligase beta subunit family. As to quaternary structure, heterotetramer of two alpha and two beta subunits. Mg(2+) serves as cofactor.

It catalyses the reaction succinate + ATP + CoA = succinyl-CoA + ADP + phosphate. The catalysed reaction is GTP + succinate + CoA = succinyl-CoA + GDP + phosphate. It functions in the pathway carbohydrate metabolism; tricarboxylic acid cycle; succinate from succinyl-CoA (ligase route): step 1/1. Its function is as follows. Succinyl-CoA synthetase functions in the citric acid cycle (TCA), coupling the hydrolysis of succinyl-CoA to the synthesis of either ATP or GTP and thus represents the only step of substrate-level phosphorylation in the TCA. The beta subunit provides nucleotide specificity of the enzyme and binds the substrate succinate, while the binding sites for coenzyme A and phosphate are found in the alpha subunit. The sequence is that of Succinate--CoA ligase [ADP-forming] subunit beta from Leptospira biflexa serovar Patoc (strain Patoc 1 / Ames).